A 370-amino-acid chain; its full sequence is tRNA-specific 2-thiouridylase MnmA (370 aa).

Residues 9 to 16 and Met35 contribute to the ATP site; that span reads GMSGGVDS. The segment at 95–97 is interaction with target base in tRNA; the sequence is NPD. Residue Cys100 is the Nucleophile of the active site. The cysteines at positions 100 and 196 are disulfide-linked. Residue Gly124 participates in ATP binding. Residues 146–148 are interaction with tRNA; the sequence is KDQ. Cys196 acts as the Cysteine persulfide intermediate in catalysis. Residues 308–309 form an interaction with tRNA region; sequence RY.

Belongs to the MnmA/TRMU family.

It is found in the cytoplasm. It carries out the reaction S-sulfanyl-L-cysteinyl-[protein] + uridine(34) in tRNA + AH2 + ATP = 2-thiouridine(34) in tRNA + L-cysteinyl-[protein] + A + AMP + diphosphate + H(+). In terms of biological role, catalyzes the 2-thiolation of uridine at the wobble position (U34) of tRNA, leading to the formation of s(2)U34. This Ralstonia nicotianae (strain ATCC BAA-1114 / GMI1000) (Ralstonia solanacearum) protein is tRNA-specific 2-thiouridylase MnmA.